We begin with the raw amino-acid sequence, 327 residues long: Ketol-acid reductoisomerase (NADP(+)) (327 aa).

A KARI N-terminal Rossmann domain is found at 2–182 (AKIYTDKDAS…GATRAGVIET (181 aa)). Residues 25 to 28 (YGIQ), arginine 48, serine 53, and 83 to 86 (DMEQ) contribute to the NADP(+) site. Residue histidine 108 is part of the active site. Glycine 134 lines the NADP(+) pocket. One can recognise a KARI C-terminal knotted domain in the interval 183 to 327 (TFAEETETDL…GAEMRKLLFG (145 aa)). Aspartate 191, glutamate 195, glutamate 227, and glutamate 231 together coordinate Mg(2+). Serine 252 lines the substrate pocket.

Belongs to the ketol-acid reductoisomerase family. Mg(2+) is required as a cofactor.

It catalyses the reaction (2R)-2,3-dihydroxy-3-methylbutanoate + NADP(+) = (2S)-2-acetolactate + NADPH + H(+). The catalysed reaction is (2R,3R)-2,3-dihydroxy-3-methylpentanoate + NADP(+) = (S)-2-ethyl-2-hydroxy-3-oxobutanoate + NADPH + H(+). The protein operates within amino-acid biosynthesis; L-isoleucine biosynthesis; L-isoleucine from 2-oxobutanoate: step 2/4. Its pathway is amino-acid biosynthesis; L-valine biosynthesis; L-valine from pyruvate: step 2/4. Functionally, involved in the biosynthesis of branched-chain amino acids (BCAA). Catalyzes an alkyl-migration followed by a ketol-acid reduction of (S)-2-acetolactate (S2AL) to yield (R)-2,3-dihydroxy-isovalerate. In the isomerase reaction, S2AL is rearranged via a Mg-dependent methyl migration to produce 3-hydroxy-3-methyl-2-ketobutyrate (HMKB). In the reductase reaction, this 2-ketoacid undergoes a metal-dependent reduction by NADPH to yield (R)-2,3-dihydroxy-isovalerate. This chain is Ketol-acid reductoisomerase (NADP(+)), found in Pyrobaculum neutrophilum (strain DSM 2338 / JCM 9278 / NBRC 100436 / V24Sta) (Thermoproteus neutrophilus).